Here is a 173-residue protein sequence, read N- to C-terminus: Ribosome maturation factor RimM (173 aa).

A PRC barrel domain is found at 102 to 173; it reads EGEYYWSDLI…TMLVDWDPEF (72 aa).

This sequence belongs to the RimM family. In terms of assembly, binds ribosomal protein uS19.

It is found in the cytoplasm. Functionally, an accessory protein needed during the final step in the assembly of 30S ribosomal subunit, possibly for assembly of the head region. Essential for efficient processing of 16S rRNA. May be needed both before and after RbfA during the maturation of 16S rRNA. It has affinity for free ribosomal 30S subunits but not for 70S ribosomes. This chain is Ribosome maturation factor RimM, found in Methylobacillus flagellatus (strain ATCC 51484 / DSM 6875 / VKM B-1610 / KT).